The sequence spans 521 residues: Bifunctional purine biosynthesis protein PurH (521 aa).

The region spanning 1–145 (MIKQALISVS…KNHRDVTVVV (145 aa)) is the MGS-like domain.

It belongs to the PurH family.

The catalysed reaction is (6R)-10-formyltetrahydrofolate + 5-amino-1-(5-phospho-beta-D-ribosyl)imidazole-4-carboxamide = 5-formamido-1-(5-phospho-D-ribosyl)imidazole-4-carboxamide + (6S)-5,6,7,8-tetrahydrofolate. It catalyses the reaction IMP + H2O = 5-formamido-1-(5-phospho-D-ribosyl)imidazole-4-carboxamide. The protein operates within purine metabolism; IMP biosynthesis via de novo pathway; 5-formamido-1-(5-phospho-D-ribosyl)imidazole-4-carboxamide from 5-amino-1-(5-phospho-D-ribosyl)imidazole-4-carboxamide (10-formyl THF route): step 1/1. It participates in purine metabolism; IMP biosynthesis via de novo pathway; IMP from 5-formamido-1-(5-phospho-D-ribosyl)imidazole-4-carboxamide: step 1/1. This Burkholderia pseudomallei (strain 1710b) protein is Bifunctional purine biosynthesis protein PurH.